The primary structure comprises 637 residues: tRNA uridine 5-carboxymethylaminomethyl modification enzyme MnmG (637 aa).

18 to 23 provides a ligand contact to FAD; sequence GAGHAG. An NAD(+)-binding site is contributed by 282–296; that stretch reads GPRYCPSIEDKIVRF.

It belongs to the MnmG family. In terms of assembly, homodimer. Heterotetramer of two MnmE and two MnmG subunits. It depends on FAD as a cofactor.

The protein localises to the cytoplasm. In terms of biological role, NAD-binding protein involved in the addition of a carboxymethylaminomethyl (cmnm) group at the wobble position (U34) of certain tRNAs, forming tRNA-cmnm(5)s(2)U34. The protein is tRNA uridine 5-carboxymethylaminomethyl modification enzyme MnmG of Pediococcus pentosaceus (strain ATCC 25745 / CCUG 21536 / LMG 10740 / 183-1w).